Consider the following 602-residue polypeptide: Portal protein (602 aa).

2 coiled-coil regions span residues 324 to 352 (NNQA…LNDE) and 486 to 542 (ITND…EQGA). The tract at residues 567 to 602 (ANNANNEESNNKPKKKLKTSDKTTWRKYPSAQNLDY) is disordered.

In terms of assembly, homododecamer.

The protein resides in the virion. Its function is as follows. Forms the portal vertex of the capsid. This portal plays critical roles in head assembly, genome packaging, neck/tail attachment, and genome ejection. The portal protein multimerizes as a single ring-shaped homododecamer arranged around a central channel. This chain is Portal protein, found in Helicobacter pylori bacteriophage KHP30.